The following is a 233-amino-acid chain: Purine nucleoside phosphorylase DeoD-type (233 aa).

His-4 contributes to the a purine D-ribonucleoside binding site. Phosphate is bound by residues Gly-20, Arg-24, Arg-43, and 87–90 (RIGT). Residues 179–181 (EME) and 203–204 (SD) contribute to the a purine D-ribonucleoside site. The active-site Proton donor is Asp-204.

It belongs to the PNP/UDP phosphorylase family. As to quaternary structure, homohexamer; trimer of homodimers.

The enzyme catalyses a purine D-ribonucleoside + phosphate = a purine nucleobase + alpha-D-ribose 1-phosphate. It carries out the reaction a purine 2'-deoxy-D-ribonucleoside + phosphate = a purine nucleobase + 2-deoxy-alpha-D-ribose 1-phosphate. Catalyzes the reversible phosphorolytic breakdown of the N-glycosidic bond in the beta-(deoxy)ribonucleoside molecules, with the formation of the corresponding free purine bases and pentose-1-phosphate. The protein is Purine nucleoside phosphorylase DeoD-type of Thermoanaerobacter pseudethanolicus (strain ATCC 33223 / 39E) (Clostridium thermohydrosulfuricum).